The chain runs to 157 residues: UPF0178 protein Nwi_2152 (157 aa).

Belongs to the UPF0178 family.

The chain is UPF0178 protein Nwi_2152 from Nitrobacter winogradskyi (strain ATCC 25391 / DSM 10237 / CIP 104748 / NCIMB 11846 / Nb-255).